The chain runs to 379 residues: Chaperone protein DnaJ (379 aa).

A J domain is found at 5 to 70; the sequence is DYYELLEVSR…QKRAAYDQFG (66 aa). The CR-type zinc-finger motif lies at 135-213; the sequence is GKEVEITVPR…CHGQGRVRES (79 aa). Positions 148, 151, 165, 168, 187, 190, 201, and 204 each coordinate Zn(2+). 4 CXXCXGXG motif repeats span residues 148–155, 165–172, 187–194, and 201–208; these read CTVCEGSG, CETCQGMG, CPTCHGEG, and CASCHGQG.

Belongs to the DnaJ family. As to quaternary structure, homodimer. It depends on Zn(2+) as a cofactor.

The protein localises to the cytoplasm. Its function is as follows. Participates actively in the response to hyperosmotic and heat shock by preventing the aggregation of stress-denatured proteins and by disaggregating proteins, also in an autonomous, DnaK-independent fashion. Unfolded proteins bind initially to DnaJ; upon interaction with the DnaJ-bound protein, DnaK hydrolyzes its bound ATP, resulting in the formation of a stable complex. GrpE releases ADP from DnaK; ATP binding to DnaK triggers the release of the substrate protein, thus completing the reaction cycle. Several rounds of ATP-dependent interactions between DnaJ, DnaK and GrpE are required for fully efficient folding. Also involved, together with DnaK and GrpE, in the DNA replication of plasmids through activation of initiation proteins. The polypeptide is Chaperone protein DnaJ (Legionella pneumophila (strain Corby)).